The following is a 402-amino-acid chain: Phosphoglycerate kinase (402 aa).

Residues 24–26 (DLN), R39, 62–65 (HLGR), R121, and R161 each bind substrate. Residues K211, G299, E330, and 359–362 (GGDS) each bind ATP.

The protein belongs to the phosphoglycerate kinase family. Monomer.

Its subcellular location is the cytoplasm. The enzyme catalyses (2R)-3-phosphoglycerate + ATP = (2R)-3-phospho-glyceroyl phosphate + ADP. The protein operates within carbohydrate degradation; glycolysis; pyruvate from D-glyceraldehyde 3-phosphate: step 2/5. The sequence is that of Phosphoglycerate kinase from Corynebacterium urealyticum (strain ATCC 43042 / DSM 7109).